Consider the following 104-residue polypeptide: Large ribosomal subunit protein bL21 (104 aa).

Belongs to the bacterial ribosomal protein bL21 family. As to quaternary structure, part of the 50S ribosomal subunit. Contacts protein L20.

In terms of biological role, this protein binds to 23S rRNA in the presence of protein L20. This chain is Large ribosomal subunit protein bL21, found in Streptococcus uberis (strain ATCC BAA-854 / 0140J).